The sequence spans 128 residues: Nanos homolog 1 (128 aa).

The tract at residues 7 to 23 is essential for its translational repressor activity; that stretch reads FDSWSDYLGLSSLISRG. The disordered stretch occupies residues 23 to 56; the sequence is GLQPRGEGENPSPRWNVSCPAPAEPLPSKEPEGR. A Nanos-type zinc finger spans residues 60–114; that stretch reads GCGFCRSNKEAMSLYSSHRLRSLDGRVLCPVLRGYTCPLCGANGDWAHTMRYCPL. Residues Cys61, Cys64, His77, Cys88, Cys96, Cys99, His107, and Cys112 each contribute to the Zn(2+) site. Short sequence motifs (C2HC) lie at residues 61 to 88 and 96 to 112; these read CGFC…RVLC and CPLC…MRYC.

The protein belongs to the nanos family. In terms of assembly, interacts with ccnb1.

It is found in the cytoplasm. Its subcellular location is the perinuclear region. Acts as a translational repressor. Can mediate repression affecting different steps in the translation process: cap-driven, IRES-driven, polyadenylated RNAs or nonpolyadenylated RNAs. Essential for the development of primordial germ cells (PGCs) by ensuring their proper migration and survival. The sequence is that of Nanos homolog 1 (nanos1) from Xenopus borealis (Kenyan clawed frog).